The sequence spans 415 residues: E3 ubiquitin-protein ligase RNF135 (415 aa).

The segment at 21–67 (CIICQGLLDWPTTLPCGHSFCLQCLKDLWVSKRAGVDSCPWACPICR) adopts an RING-type zinc-finger fold. A coiled-coil region spans residues 181 to 206 (TFSASQKKIQEILRDLEKIQETLQGS). The B30.2/SPRY domain occupies 228–415 (PDQRYPVSRK…LTPGNYLEIL (188 aa)).

In terms of assembly, homodimer. Interacts (homodimer) with RIGI (double-stranded RNA-bound oligomeric form); involved in both RIGI ubiquitination, oligomerization into filaments associated with viral RNAs and the bridging of these filaments. Interacts with UBE2D3 and UBE2N; E2 ubiquitin ligases involved in RNF135-mediated ubiquitination of RIGI and activation of the RIG-I signaling pathway. Interacts with PCBP2.

The protein localises to the cytoplasm. Its subcellular location is the stress granule. It catalyses the reaction S-ubiquitinyl-[E2 ubiquitin-conjugating enzyme]-L-cysteine + [acceptor protein]-L-lysine = [E2 ubiquitin-conjugating enzyme]-L-cysteine + N(6)-ubiquitinyl-[acceptor protein]-L-lysine.. It participates in protein modification; protein ubiquitination. In terms of biological role, E2-dependent E3 ubiquitin-protein ligase that functions as a RIGI coreceptor in the sensing of viral RNAs in cell cytoplasm and the activation of the antiviral innate immune response. Together with the UBE2D3, UBE2N and UB2V1 E2 ligases, catalyzes the 'Lys-63'-linked polyubiquitination of RIGI oligomerized on viral RNAs, an essential step in the activation of the RIG-I signaling pathway. Through a ubiquitin-independent parallel mechanism, which consists in bridging RIGI filaments forming on longer viral RNAs, further activates the RIG-I signaling pathway. This second mechanism that synergizes with the ubiquitin-dependent one would thereby allow an RNA length-dependent regulation of the RIG-I signaling pathway. Associated with the E2 ligase UBE2N, also constitutively synthesizes unanchored 'Lys-63'-linked polyubiquitin chains that may also activate the RIG-I signaling pathway. This is E3 ubiquitin-protein ligase RNF135 from Rattus norvegicus (Rat).